Here is a 520-residue protein sequence, read N- to C-terminus: GMP synthase [glutamine-hydrolyzing] (520 aa).

In terms of domain architecture, Glutamine amidotransferase type-1 spans 12 to 205 (KIIVLDYGSQ…AIFICGARGD (194 aa)). Cys-89 acts as the Nucleophile in catalysis. Residues His-179 and Glu-181 contribute to the active site. In terms of domain architecture, GMPS ATP-PPase spans 206-395 (WSMDNFIDMQ…LGMPENIVWR (190 aa)). 233–239 (SGGVDSS) lines the ATP pocket.

As to quaternary structure, homodimer.

The catalysed reaction is XMP + L-glutamine + ATP + H2O = GMP + L-glutamate + AMP + diphosphate + 2 H(+). It functions in the pathway purine metabolism; GMP biosynthesis; GMP from XMP (L-Gln route): step 1/1. Catalyzes the synthesis of GMP from XMP. The polypeptide is GMP synthase [glutamine-hydrolyzing] (Streptococcus uberis (strain ATCC BAA-854 / 0140J)).